A 215-amino-acid chain; its full sequence is Pyrrolidone-carboxylate peptidase (215 aa).

Active-site residues include Glu80, Cys143, and His167.

This sequence belongs to the peptidase C15 family. As to quaternary structure, homotetramer.

The protein resides in the cytoplasm. It carries out the reaction Release of an N-terminal pyroglutamyl group from a polypeptide, the second amino acid generally not being Pro.. Removes 5-oxoproline from various penultimate amino acid residues except L-proline. This Bacillus cereus (strain B4264) protein is Pyrrolidone-carboxylate peptidase.